The primary structure comprises 387 residues: Acetylserotonin O-methyltransferase (387 aa).

S-adenosyl-L-methionine-binding positions include tyrosine 153, tryptophan 170, glutamate 216, 246–248, and arginine 263; that span reads GDF. The active-site Proton donor/acceptor is the histidine 266. Residues aspartate 267 and glutamine 317 each coordinate substrate. The interval 354–387 is disordered; it reads AARGGGAGARSDGGGGDATSQTGSGTGSEVGAQD. The span at 356-370 shows a compositional bias: gly residues; sequence RGGGAGARSDGGGGD.

It belongs to the class I-like SAM-binding methyltransferase superfamily. Cation-independent O-methyltransferase family. In terms of assembly, homodimer. In terms of tissue distribution, expressed predominantly in the pineal gland (at protein level). Very low expression, if any, in the retina.

It carries out the reaction N-acetylserotonin + S-adenosyl-L-methionine = melatonin + S-adenosyl-L-homocysteine + H(+). It functions in the pathway aromatic compound metabolism; melatonin biosynthesis; melatonin from serotonin: step 1/2. Functionally, catalyzes the transfer of a methyl group onto N-acetylserotonin, producing melatonin (N-acetyl-5-methoxytryptamine). The chain is Acetylserotonin O-methyltransferase (Asmt) from Mus musculus (Mouse).